An 875-amino-acid chain; its full sequence is Probable serine/threonine-protein kinase samkC (875 aa).

Residues Met-1–Asp-12 show a composition bias toward polar residues. Residues Met-1 to Asn-47 form a disordered region. Over residues Asn-13–Asn-45 the composition is skewed to low complexity. An SAM domain is found at Trp-51 to Phe-116. Residues Asp-135–Asn-162 are a coiled coil. Residues Asn-136–Asn-168 are compositionally biased toward low complexity. The disordered stretch occupies residues Asn-136–Thr-170. A Protein kinase domain is found at Tyr-181–Phe-452. ATP-binding positions include Met-187–Leu-195 and Lys-210. Residue Asp-301 is the Proton acceptor of the active site. Disordered regions lie at residues Asn-331–Asn-362 and Ser-461–Asn-718. The span at Pro-474–Ser-554 shows a compositional bias: low complexity. The span at Glu-555 to Lys-564 shows a compositional bias: pro residues. 3 stretches are compositionally biased toward low complexity: residues Pro-565–Ser-581, Gln-589–Thr-611, and Gln-617–Lys-653. Residues Gln-626–Lys-655 are a coiled coil. The segment covering Ser-654–Pro-663 has biased composition (basic and acidic residues). Positions Glu-664–Asn-718 are enriched in low complexity. A helical membrane pass occupies residues Thr-842–Leu-862.

The protein belongs to the protein kinase superfamily. Ser/Thr protein kinase family.

It is found in the membrane. It carries out the reaction L-seryl-[protein] + ATP = O-phospho-L-seryl-[protein] + ADP + H(+). It catalyses the reaction L-threonyl-[protein] + ATP = O-phospho-L-threonyl-[protein] + ADP + H(+). This is Probable serine/threonine-protein kinase samkC (samkC) from Dictyostelium discoideum (Social amoeba).